The following is a 344-amino-acid chain: N-acetyl-gamma-glutamyl-phosphate reductase (344 aa).

Cys148 is an active-site residue.

It belongs to the NAGSA dehydrogenase family. Type 1 subfamily.

It is found in the cytoplasm. It carries out the reaction N-acetyl-L-glutamate 5-semialdehyde + phosphate + NADP(+) = N-acetyl-L-glutamyl 5-phosphate + NADPH + H(+). Its pathway is amino-acid biosynthesis; L-arginine biosynthesis; N(2)-acetyl-L-ornithine from L-glutamate: step 3/4. In terms of biological role, catalyzes the NADPH-dependent reduction of N-acetyl-5-glutamyl phosphate to yield N-acetyl-L-glutamate 5-semialdehyde. This Clostridium kluyveri (strain NBRC 12016) protein is N-acetyl-gamma-glutamyl-phosphate reductase.